Consider the following 171-residue polypeptide: 3-hydroxydecanoyl-[acyl-carrier-protein] dehydratase (171 aa).

His-70 is an active-site residue.

It belongs to the thioester dehydratase family. FabA subfamily. Homodimer.

Its subcellular location is the cytoplasm. The catalysed reaction is a (3R)-hydroxyacyl-[ACP] = a (2E)-enoyl-[ACP] + H2O. It catalyses the reaction (3R)-hydroxydecanoyl-[ACP] = (2E)-decenoyl-[ACP] + H2O. The enzyme catalyses (2E)-decenoyl-[ACP] = (3Z)-decenoyl-[ACP]. The protein operates within lipid metabolism; fatty acid biosynthesis. Functionally, necessary for the introduction of cis unsaturation into fatty acids. Catalyzes the dehydration of (3R)-3-hydroxydecanoyl-ACP to E-(2)-decenoyl-ACP and then its isomerization to Z-(3)-decenoyl-ACP. Can catalyze the dehydratase reaction for beta-hydroxyacyl-ACPs with saturated chain lengths up to 16:0, being most active on intermediate chain length. This chain is 3-hydroxydecanoyl-[acyl-carrier-protein] dehydratase, found in Pseudoalteromonas translucida (strain TAC 125).